The primary structure comprises 379 residues: GDSL esterase/lipase EXL2 (379 aa).

An N-terminal signal peptide occupies residues 1-35 (MKRNSINIHHVTSFSSSPFWCVFFLVLLCKTSTNA). Residue asparagine 42 is glycosylated (N-linked (GlcNAc...) asparagine). Catalysis depends on serine 54, which acts as the Nucleophile. Catalysis depends on residues aspartate 358 and histidine 361.

The protein belongs to the 'GDSL' lipolytic enzyme family.

It is found in the secreted. The protein is GDSL esterase/lipase EXL2 (EXL2) of Arabidopsis thaliana (Mouse-ear cress).